The chain runs to 268 residues: Hydroxyacylglutathione hydrolase (268 aa).

Residues His56, His58, Asp60, His61, His113, Asp130, and His168 each contribute to the Zn(2+) site.

It belongs to the metallo-beta-lactamase superfamily. Glyoxalase II family. In terms of assembly, monomer. Zn(2+) serves as cofactor.

The catalysed reaction is an S-(2-hydroxyacyl)glutathione + H2O = a 2-hydroxy carboxylate + glutathione + H(+). Its pathway is secondary metabolite metabolism; methylglyoxal degradation; (R)-lactate from methylglyoxal: step 2/2. Thiolesterase that catalyzes the hydrolysis of S-D-lactoyl-glutathione to form glutathione and D-lactic acid. This is Hydroxyacylglutathione hydrolase from Hydrogenovibrio crunogenus (strain DSM 25203 / XCL-2) (Thiomicrospira crunogena).